We begin with the raw amino-acid sequence, 313 residues long: Biotin synthase (313 aa).

The 231-residue stretch at N28–S258 folds into the Radical SAM core domain. Residues C46, C50, and C53 each contribute to the [4Fe-4S] cluster site. Residues C90, C121, C181, and R256 each coordinate [2Fe-2S] cluster.

This sequence belongs to the radical SAM superfamily. Biotin synthase family. As to quaternary structure, homodimer. The cofactor is [4Fe-4S] cluster. It depends on [2Fe-2S] cluster as a cofactor.

The catalysed reaction is (4R,5S)-dethiobiotin + (sulfur carrier)-SH + 2 reduced [2Fe-2S]-[ferredoxin] + 2 S-adenosyl-L-methionine = (sulfur carrier)-H + biotin + 2 5'-deoxyadenosine + 2 L-methionine + 2 oxidized [2Fe-2S]-[ferredoxin]. It participates in cofactor biosynthesis; biotin biosynthesis; biotin from 7,8-diaminononanoate: step 2/2. In terms of biological role, catalyzes the conversion of dethiobiotin (DTB) to biotin by the insertion of a sulfur atom into dethiobiotin via a radical-based mechanism. The polypeptide is Biotin synthase (Francisella philomiragia subsp. philomiragia (strain ATCC 25017 / CCUG 19701 / FSC 153 / O#319-036)).